A 455-amino-acid polypeptide reads, in one-letter code: Argininosuccinate lyase (455 aa).

The protein belongs to the lyase 1 family. Argininosuccinate lyase subfamily.

The protein localises to the cytoplasm. The catalysed reaction is 2-(N(omega)-L-arginino)succinate = fumarate + L-arginine. The protein operates within amino-acid biosynthesis; L-arginine biosynthesis; L-arginine from L-ornithine and carbamoyl phosphate: step 3/3. The polypeptide is Argininosuccinate lyase (Caulobacter vibrioides (strain ATCC 19089 / CIP 103742 / CB 15) (Caulobacter crescentus)).